Here is a 132-residue protein sequence, read N- to C-terminus: Histone H2B.9 (132 aa).

A compositionally biased stretch (basic and acidic residues) spans 1 to 11; it reads MAPKAEKKPAE. A disordered region spans residues 1–41; sequence MAPKAEKKPAEKAPAPKAEKKIAKEGGTSEIVKKKKKTKKS. A2 bears the N,N,N-trimethylalanine; alternate mark. N,N-dimethylalanine; alternate is present on A2. The residue at position 2 (A2) is an N-methylalanine; alternate. N6-methyllysine is present on K4. K7, K12, K20, and K21 each carry N6-acetyllysine. K128 is covalently cross-linked (Glycyl lysine isopeptide (Lys-Gly) (interchain with G-Cter in ubiquitin)).

This sequence belongs to the histone H2B family. In terms of assembly, the nucleosome is a histone octamer containing two molecules each of H2A, H2B, H3 and H4 assembled in one H3-H4 heterotetramer and two H2A-H2B heterodimers. The octamer wraps approximately 147 bp of DNA. Post-translationally, can be acetylated to form H2BK6ac, H2BK33ac and H2BK34ac. Monoubiquitinated by BRE1 to form H2BK143ub1 and deubiquitinated by UBP26. Required for heterochromatic histone H3 di- and trimethylation at H3K4me. May give a specific tag for epigenetic transcriptional activation.

The protein localises to the nucleus. The protein resides in the chromosome. Its function is as follows. Core component of nucleosome. Nucleosomes wrap and compact DNA into chromatin, limiting DNA accessibility to the cellular machineries which require DNA as a template. Histones thereby play a central role in transcription regulation, DNA repair, DNA replication and chromosomal stability. DNA accessibility is regulated via a complex set of post-translational modifications of histones, also called histone code, and nucleosome remodeling. In Arabidopsis thaliana (Mouse-ear cress), this protein is Histone H2B.9.